The sequence spans 120 residues: Large ribosomal subunit protein uL24 (120 aa).

Residues Met1–Ser26 are disordered. A compositionally biased stretch (basic residues) spans Arg10–Arg24.

This sequence belongs to the universal ribosomal protein uL24 family. Part of the 50S ribosomal subunit.

Functionally, one of two assembly initiator proteins, it binds directly to the 5'-end of the 23S rRNA, where it nucleates assembly of the 50S subunit. In terms of biological role, located at the polypeptide exit tunnel on the outside of the subunit. This is Large ribosomal subunit protein uL24 from Methanospirillum hungatei JF-1 (strain ATCC 27890 / DSM 864 / NBRC 100397 / JF-1).